The chain runs to 1213 residues: Oligopeptidase PhomG' (1213 aa).

Position 447 (His447) interacts with Zn(2+). Glu448 is a catalytic residue. Zn(2+) contacts are provided by His451 and His454.

It belongs to the peptidase M3 family. In terms of assembly, monomer. It depends on Zn(2+) as a cofactor.

The protein operates within mycotoxin biosynthesis. Oligopeptidase; part of the gene cluster that mediates the biosynthesis of the phomopsins, a group of hexapeptide mycotoxins which infects lupins and causes lupinosis disease in livestock. Within the pathway, phomG and phomG' are probably involved in the processing of the phomA and phomA' precursors. The pathway starts with the processing of the precursor phomA by several endopeptidases including kexin proteases as well as the cluster-specific S41 family peptidase phomP1 and the oligopeptidase phomG to produce 10 identical copies of the hexapeptide Tyr-Val-Ile-Pro-Ile-Asp. After being excised from the precursor peptide, the core peptides are cyclized and modified post-translationally by enzymes encoded within the gene cluster. The timing and order of proteolysis of the phomA precursor and PTMs are still unknown. Two tyrosinase-like enzymes, phomQ1 and phomQ2, catalyze the chlorination and hydroxylation of Tyr, respectively. PhomYb, is proposed to be involved in the construction of the macrocyclic structure. The other 4 ustYa family proteins may be involved in PTMs that generate the unique structure of phomopsin A. PhomYa is required for the hydroxylation of C-beta of Tyr. PhomYc, phomYd, and phomYe are responsible for the biosynthesis of 2,3-dehydroisoleucine (dIle), 2,3-dehydroaspartic acid (dAsp), and 3,4-dehydroproline (dPro), respectively. While dIle formation by phomYc is indispensable for the installation of dAsp by phomYd, the order of the other PTMs have not been elucidated yet. Most of the biosynthetic enzymes likely have broad substrate specificity, and thus, there might be a metabolic grid from a precursor to phomopsin A. The enzyme(s) responsible for the biosynthesis of 3,4-dehydrovaline (dVal) have also not been identified yet. Finally, phomM acts as an S-adenosylmethionine-dependent alpha-N-methyltransferase that catalyzes two successive N-methylation reactions, converting N-desmethyl-phomopsin A to phomopsin A and phomopsin A further to an N,N-dimethylated congener called phomopsin E. The protein is Oligopeptidase PhomG' of Diaporthe leptostromiformis (Lupinosis disease fungus).